Here is a 511-residue protein sequence, read N- to C-terminus: Cobyric acid synthase (511 aa).

A GATase cobBQ-type domain is found at 251-443; it reads LLDIAIICLP…IHGIFDNDIF (193 aa). The active-site Nucleophile is Cys-332. The active site involves His-435.

This sequence belongs to the CobB/CobQ family. CobQ subfamily.

It participates in cofactor biosynthesis; adenosylcobalamin biosynthesis. Its function is as follows. Catalyzes amidations at positions B, D, E, and G on adenosylcobyrinic A,C-diamide. NH(2) groups are provided by glutamine, and one molecule of ATP is hydrogenolyzed for each amidation. This Listeria welshimeri serovar 6b (strain ATCC 35897 / DSM 20650 / CCUG 15529 / CIP 8149 / NCTC 11857 / SLCC 5334 / V8) protein is Cobyric acid synthase.